A 381-amino-acid chain; its full sequence is MNMAQTVTQNPRGVKTLLPLDVELRNVFKFFNQEPAVHGVDLDVKQGEFFSILGPSGCGKTTTLRLIAGFEQVDAGKLLIQGQPMTNIPPYRRPVNTVFQSYALFNHLNVWDNVAFGLRLKKSRKSEVESRVKEALKLVKMESLRSRFPSQLSGGQQQRVALARALVNRPAVVLLDEPLGALDLKLRKEMQVELSNLHKNLGLTFIMVTHDQEEALSLSDRIAVMNQGKIEQIGTPQEIYERPKTSFVADFIGDTNLFSGEITVLEAEYIQIVTKTGLTIVVARNEDTPAELLKSVVVSVRPEKIQLSLYPPSSLNNCFEGRLINVMYLGTHVNYLVQLINGININVLQPNTFGNLPDRETPIYAWWAESDCLAINQMTND.

The region spanning 22–252 (VELRNVFKFF…PKTSFVADFI (231 aa)) is the ABC transporter domain. 54 to 61 (GPSGCGKT) provides a ligand contact to ATP.

The protein belongs to the ABC transporter superfamily. Spermidine/putrescine importer (TC 3.A.1.11.1) family. The complex is composed of two ATP-binding proteins (PotA), two transmembrane proteins (PotB and PotC) and a solute-binding protein (PotD).

The protein localises to the cell inner membrane. The enzyme catalyses ATP + H2O + polyamine-[polyamine-binding protein]Side 1 = ADP + phosphate + polyamineSide 2 + [polyamine-binding protein]Side 1.. Its function is as follows. Part of the ABC transporter complex PotABCD involved in spermidine/putrescine import. Responsible for energy coupling to the transport system. In Trichormus variabilis (strain ATCC 29413 / PCC 7937) (Anabaena variabilis), this protein is Spermidine/putrescine import ATP-binding protein PotA.